We begin with the raw amino-acid sequence, 256 residues long: MSSTRIPVIALLAAAGRGTRLGGPIPKAFVTLRERTLLERSLQAMLTSESVDEIIILVSPDMETYARDLLRKRGLLNDPEGVRIRLVHGGGERADSVWAGLQAILLDDATPDAIVLIHDSARALTPPGMIARVVRKVHEGATAVIPVLPVSDTIKRVSLDAGVVVDTPNRAELRAVQTPQGFLLSELVAANKKFFADPNPGFIPTDDASLMEWYGADVVCVQGDPMAFKVTTPIDMMLAQRITDEAEPTIFEVPGD.

This sequence belongs to the IspD/TarI cytidylyltransferase family. IspD subfamily.

The enzyme catalyses 2-C-methyl-D-erythritol 4-phosphate + CTP + H(+) = 4-CDP-2-C-methyl-D-erythritol + diphosphate. It functions in the pathway isoprenoid biosynthesis; isopentenyl diphosphate biosynthesis via DXP pathway; isopentenyl diphosphate from 1-deoxy-D-xylulose 5-phosphate: step 2/6. Functionally, catalyzes the formation of 4-diphosphocytidyl-2-C-methyl-D-erythritol from CTP and 2-C-methyl-D-erythritol 4-phosphate (MEP). This chain is 2-C-methyl-D-erythritol 4-phosphate cytidylyltransferase, found in Corynebacterium glutamicum (strain R).